The following is a 132-amino-acid chain: UPF0719 inner membrane protein YjfL (132 aa).

Topologically, residues 1–6 (MHILDS) are periplasmic. Residues 7-27 (LLAFSAYFFIGVAMVIIFLFI) form a helical membrane-spanning segment. Residues 28 to 46 (YSKITPHNEWQLIKNNNTA) lie on the Cytoplasmic side of the membrane. A helical transmembrane segment spans residues 47–67 (ASLAFSGTLLGYVIPLSSAAI). The Periplasmic segment spans residues 68-71 (NAVS). The chain crosses the membrane as a helical span at residues 72–92 (IPDYFAWGGIALVIQLLVFAG). The Cytoplasmic portion of the chain corresponds to 93–109 (VRLYMPALSEKIINHNT). A helical transmembrane segment spans residues 110 to 130 (AAGMFMGTAALAGGIFNAACM). The Periplasmic portion of the chain corresponds to 131 to 132 (TW).

It belongs to the UPF0719 family.

It localises to the cell inner membrane. The sequence is that of UPF0719 inner membrane protein YjfL (yjfL) from Escherichia coli O157:H7.